Reading from the N-terminus, the 128-residue chain is Ribonuclease P protein component (128 aa).

Belongs to the RnpA family. Consists of a catalytic RNA component (M1 or rnpB) and a protein subunit.

It catalyses the reaction Endonucleolytic cleavage of RNA, removing 5'-extranucleotides from tRNA precursor.. Functionally, RNaseP catalyzes the removal of the 5'-leader sequence from pre-tRNA to produce the mature 5'-terminus. It can also cleave other RNA substrates such as 4.5S RNA. The protein component plays an auxiliary but essential role in vivo by binding to the 5'-leader sequence and broadening the substrate specificity of the ribozyme. The polypeptide is Ribonuclease P protein component (Parasynechococcus marenigrum (strain WH8102)).